A 194-amino-acid polypeptide reads, in one-letter code: uncharacterized protein (194 aa).

Positions 77 to 92 (QTQPQHQTLSQHLPQT) are enriched in polar residues. Residues 77–96 (QTQPQHQTLSQHLPQTHHTD) are disordered. A helical membrane pass occupies residues 169–189 (FWEILLLIILIAVLVYGIYWL).

The protein localises to the host membrane. The protein resides in the virion. This is an uncharacterized protein from Acanthamoeba polyphaga (Amoeba).